A 1010-amino-acid chain; its full sequence is BrkA autotransporter (1010 aa).

Positions 1-42 (MYLDRFRQCPSSLQIPRSAWRLHALAAALALAGMARLAPAAA) are cleaved as a signal peptide. The 269-residue stretch at 742–1010 (LRADAGGPWA…SFHAGYRYSF (269 aa)) folds into the Autotransporter domain.

It is found in the periplasm. Its subcellular location is the secreted. The protein resides in the cell surface. It localises to the cell outer membrane. Inhibits the classical pathway of complement activation and prevents accumulation of deposited C4. This Bordetella pertussis (strain Tohama I / ATCC BAA-589 / NCTC 13251) protein is BrkA autotransporter.